We begin with the raw amino-acid sequence, 335 residues long: Cobalt-precorrin-5B C(1)-methyltransferase (335 aa).

This sequence belongs to the CbiD family.

It carries out the reaction Co-precorrin-5B + S-adenosyl-L-methionine = Co-precorrin-6A + S-adenosyl-L-homocysteine. Its pathway is cofactor biosynthesis; adenosylcobalamin biosynthesis; cob(II)yrinate a,c-diamide from sirohydrochlorin (anaerobic route): step 6/10. In terms of biological role, catalyzes the methylation of C-1 in cobalt-precorrin-5B to form cobalt-precorrin-6A. This chain is Cobalt-precorrin-5B C(1)-methyltransferase, found in Methanospirillum hungatei JF-1 (strain ATCC 27890 / DSM 864 / NBRC 100397 / JF-1).